The chain runs to 265 residues: 4-hydroxy-tetrahydrodipicolinate reductase (265 aa).

9–14 (GPRGRM) contributes to the NAD(+) binding site. K37 provides a ligand contact to NADP(+). NAD(+)-binding positions include 99–101 (GTT) and 125–128 (APNF). Catalysis depends on H155, which acts as the Proton donor/acceptor. (S)-2,3,4,5-tetrahydrodipicolinate is bound at residue H156. The active-site Proton donor is K159. 165–166 (GT) lines the (S)-2,3,4,5-tetrahydrodipicolinate pocket. Over residues 178 to 190 (RESQKQGHPKEEE) the composition is skewed to basic and acidic residues. The interval 178 to 200 (RESQKQGHPKEEETLPGARGADM) is disordered.

Belongs to the DapB family.

The protein localises to the cytoplasm. It carries out the reaction (S)-2,3,4,5-tetrahydrodipicolinate + NAD(+) + H2O = (2S,4S)-4-hydroxy-2,3,4,5-tetrahydrodipicolinate + NADH + H(+). The enzyme catalyses (S)-2,3,4,5-tetrahydrodipicolinate + NADP(+) + H2O = (2S,4S)-4-hydroxy-2,3,4,5-tetrahydrodipicolinate + NADPH + H(+). It participates in amino-acid biosynthesis; L-lysine biosynthesis via DAP pathway; (S)-tetrahydrodipicolinate from L-aspartate: step 4/4. Functionally, catalyzes the conversion of 4-hydroxy-tetrahydrodipicolinate (HTPA) to tetrahydrodipicolinate. This chain is 4-hydroxy-tetrahydrodipicolinate reductase, found in Oceanobacillus iheyensis (strain DSM 14371 / CIP 107618 / JCM 11309 / KCTC 3954 / HTE831).